A 263-amino-acid chain; its full sequence is Tryptophan synthase alpha chain (263 aa).

Residues E41 and D52 each act as proton acceptor in the active site.

The protein belongs to the TrpA family. Tetramer of two alpha and two beta chains.

It carries out the reaction (1S,2R)-1-C-(indol-3-yl)glycerol 3-phosphate + L-serine = D-glyceraldehyde 3-phosphate + L-tryptophan + H2O. It functions in the pathway amino-acid biosynthesis; L-tryptophan biosynthesis; L-tryptophan from chorismate: step 5/5. Functionally, the alpha subunit is responsible for the aldol cleavage of indoleglycerol phosphate to indole and glyceraldehyde 3-phosphate. The polypeptide is Tryptophan synthase alpha chain (Geobacillus sp. (strain WCH70)).